Consider the following 860-residue polypeptide: Leucine--tRNA ligase (860 aa).

A 'HIGH' region motif is present at residues 42 to 52; sequence PYPSGRLHMGH. Residues 619–623 carry the 'KMSKS' region motif; it reads KMSKS. Lys622 is a binding site for ATP.

This sequence belongs to the class-I aminoacyl-tRNA synthetase family.

The protein resides in the cytoplasm. It carries out the reaction tRNA(Leu) + L-leucine + ATP = L-leucyl-tRNA(Leu) + AMP + diphosphate. The sequence is that of Leucine--tRNA ligase from Salmonella agona (strain SL483).